The following is a 528-amino-acid chain: G protein-coupled receptor 161 (528 aa).

At Met-1–Glu-30 the chain is on the extracellular side. Asn-4 and Asn-15 each carry an N-linked (GlcNAc...) asparagine glycan. The chain crosses the membrane as a helical span at residues Phe-31 to Thr-51. Topologically, residues Leu-52 to Lys-64 are cytoplasmic. The helical transmembrane segment at Phe-65 to Val-85 threads the bilayer. Residues Thr-86–Asn-101 lie on the Extracellular side of the membrane. Residues Cys-100 and Cys-178 are joined by a disulfide bond. Asn-101 carries an N-linked (GlcNAc...) asparagine glycan. A helical transmembrane segment spans residues Phe-102–Ala-122. Over Val-123–Arg-143 the chain is Cytoplasmic. Residues Ala-144 to Phe-164 traverse the membrane as a helical segment. The Extracellular segment spans residues Gly-165–Ala-190. Residues Phe-191–Ile-211 form a helical membrane-spanning segment. Over Phe-212 to Leu-269 the chain is Cytoplasmic. A helical transmembrane segment spans residues Val-270–Ile-290. Residues Thr-291–Glu-306 lie on the Extracellular side of the membrane. A helical membrane pass occupies residues Thr-307–Trp-327. At Asn-328–Arg-528 the chain is on the cytoplasmic side.

Belongs to the G-protein coupled receptor 1 family.

The protein localises to the cell projection. It is found in the cilium membrane. Its subcellular location is the cell membrane. Functionally, key negative regulator of Shh signaling, which promotes the processing of GLI3 into GLI3R during neural tube development. Recruited by TULP3 and the IFT-A complex to primary cilia and acts as a regulator of the PKA-dependent basal repression machinery in Shh signaling by increasing cAMP levels, leading to promote the PKA-dependent processing of GLI3 into GLI3R and repress the Shh signaling. In presence of SHH, it is removed from primary cilia and is internalized into recycling endosomes, preventing its activity and allowing activation of the Shh signaling. Its ligand is unknown. This Bos taurus (Bovine) protein is G protein-coupled receptor 161 (GPR161).